The primary structure comprises 418 residues: MTYLEIEGTNHLSGNVTISGAKNAALPLIVSSILAKNEVKINNVPNVADIKTLISLLENLGAKVNFQNNSALLNTNTLNQTIAKYDIVRKMRASILTLGPLLARFGHCEVSLPGGCAIGQRPIDLHLLALEKMGANIQIKQGYVVASGNLKGNEILFDKITVTGSENIIMAAALAKGKTKLLNVAKEPEVVQLCEVLKDAGLEIKGIGTDELEIYGSDGELLEFKEFSVIPDRIEAGTYLCAGAITNSKITLDKVNATHLSAVLAKLHQMGFETLIAEDSITLLPAKEIKPVEIMTSEYPGFPTDMQAQFMALALKANGTSIIDERLFENRFMHVSELLRMGADIKLNGHIATIVGGKELNAADVMATDLRASSALILAALAAKGTSKVHRIYHLDRGYENLEEKFKGLGVKITRLEE.

A phosphoenolpyruvate-binding site is contributed by 22 to 23; that stretch reads KN. Arg-92 provides a ligand contact to UDP-N-acetyl-alpha-D-glucosamine. The Proton donor role is filled by Cys-116. Cys-116 is subject to 2-(S-cysteinyl)pyruvic acid O-phosphothioketal. Residues 121–125, Asp-305, and Leu-327 contribute to the UDP-N-acetyl-alpha-D-glucosamine site; that span reads RPIDL.

This sequence belongs to the EPSP synthase family. MurA subfamily.

The protein localises to the cytoplasm. The enzyme catalyses phosphoenolpyruvate + UDP-N-acetyl-alpha-D-glucosamine = UDP-N-acetyl-3-O-(1-carboxyvinyl)-alpha-D-glucosamine + phosphate. It participates in cell wall biogenesis; peptidoglycan biosynthesis. Its function is as follows. Cell wall formation. Adds enolpyruvyl to UDP-N-acetylglucosamine. This is UDP-N-acetylglucosamine 1-carboxyvinyltransferase from Campylobacter jejuni (strain RM1221).